The sequence spans 872 residues: Alanine--tRNA ligase (872 aa).

Zn(2+)-binding residues include histidine 567, histidine 571, cysteine 669, and histidine 673.

It belongs to the class-II aminoacyl-tRNA synthetase family. It depends on Zn(2+) as a cofactor.

It is found in the cytoplasm. It carries out the reaction tRNA(Ala) + L-alanine + ATP = L-alanyl-tRNA(Ala) + AMP + diphosphate. Functionally, catalyzes the attachment of alanine to tRNA(Ala) in a two-step reaction: alanine is first activated by ATP to form Ala-AMP and then transferred to the acceptor end of tRNA(Ala). Also edits incorrectly charged Ser-tRNA(Ala) and Gly-tRNA(Ala) via its editing domain. The protein is Alanine--tRNA ligase of Streptococcus pneumoniae (strain Hungary19A-6).